The sequence spans 326 residues: Mitochondrial glycine transporter (326 aa).

Solcar repeat units follow at residues histidine 45–tyrosine 134, proline 141–threonine 225, and leucine 237–lysine 321. Transmembrane regions (helical) follow at residues phenylalanine 51–glutamine 76, glycine 109–phenylalanine 135, valine 147–glutamate 172, glycine 200–arginine 223, valine 241–methionine 267, and glycine 296–valine 314.

It belongs to the mitochondrial carrier (TC 2.A.29) family. SLC25A38 subfamily.

It localises to the mitochondrion inner membrane. It carries out the reaction glycine(in) = glycine(out). Functionally, mitochondrial glycine transporter that imports glycine into the mitochondrial matrix. Plays an important role in providing glycine for the first enzymatic step in heme biosynthesis, the condensation of glycine with succinyl-CoA to produce 5-aminolevulinate (ALA) in the mitochondrial matrix. Required during erythropoiesis. Its function is as follows. Plays a role as pro-apoptotic protein that induces caspase-dependent apoptosis. The protein is Mitochondrial glycine transporter of Rattus norvegicus (Rat).